The chain runs to 590 residues: Phosphomethylpyrimidine synthase (590 aa).

Residues N197, M226, Y255, H291, 311-313 (SRG), 352-355 (DGLR), and E391 each bind substrate. Zn(2+) is bound at residue H395. Y418 contacts substrate. Residue H459 coordinates Zn(2+). Residues C539, C542, and C547 each contribute to the [4Fe-4S] cluster site.

It belongs to the ThiC family. [4Fe-4S] cluster serves as cofactor.

The enzyme catalyses 5-amino-1-(5-phospho-beta-D-ribosyl)imidazole + S-adenosyl-L-methionine = 4-amino-2-methyl-5-(phosphooxymethyl)pyrimidine + CO + 5'-deoxyadenosine + formate + L-methionine + 3 H(+). The protein operates within cofactor biosynthesis; thiamine diphosphate biosynthesis. Functionally, catalyzes the synthesis of the hydroxymethylpyrimidine phosphate (HMP-P) moiety of thiamine from aminoimidazole ribotide (AIR) in a radical S-adenosyl-L-methionine (SAM)-dependent reaction. The sequence is that of Phosphomethylpyrimidine synthase from Bacillus subtilis (strain 168).